Consider the following 447-residue polypeptide: Chromosomal replication initiator protein DnaA (447 aa).

The tract at residues 1–70 (MQDFWSKAMD…EEILSEQLGE (70 aa)) is domain I, interacts with DnaA modulators. Residues 70–110 (EPVTLLFAADPALEKPVASKTQTVTPVQSGGETGDQENFHS) form a domain II region. Positions 87–109 (ASKTQTVTPVQSGGETGDQENFH) are disordered. The span at 88–99 (SKTQTVTPVQSG) shows a compositional bias: polar residues. Residues 111–327 (GLDPRYTFDS…GALIRVSAYA (217 aa)) are domain III, AAA+ region. ATP is bound by residues glycine 155, glycine 157, lysine 158, and threonine 159. The interval 328–447 (SLTGKPITMA…LASLKSMLQK (120 aa)) is domain IV, binds dsDNA.

It belongs to the DnaA family. Oligomerizes as a right-handed, spiral filament on DNA at oriC.

Its subcellular location is the cytoplasm. Plays an essential role in the initiation and regulation of chromosomal replication. ATP-DnaA binds to the origin of replication (oriC) to initiate formation of the DNA replication initiation complex once per cell cycle. Binds the DnaA box (a 9 base pair repeat at the origin) and separates the double-stranded (ds)DNA. Forms a right-handed helical filament on oriC DNA; dsDNA binds to the exterior of the filament while single-stranded (ss)DNA is stabiized in the filament's interior. The ATP-DnaA-oriC complex binds and stabilizes one strand of the AT-rich DNA unwinding element (DUE), permitting loading of DNA polymerase. After initiation quickly degrades to an ADP-DnaA complex that is not apt for DNA replication. Binds acidic phospholipids. This chain is Chromosomal replication initiator protein DnaA, found in Magnetococcus marinus (strain ATCC BAA-1437 / JCM 17883 / MC-1).